The sequence spans 261 residues: MPHASAFLEVIPAIDLLQGRAVRLYQGDYAQAEQVAADPVQQAEIWATQGAPRLHVVDLDGAKSGDPVNLPIIADIVRKLAIPVQVGGGIRSLERARQLLDLGVERVIVGTVAVEDPALLEAMTQALPGRIWVGIDARQGQVATRGWLSTTPLAATELVQRVQAQGAAGIIYTDIGRDGTLAGPNLEQLRQILAVSRLPVIASGGIGSLTDLLALLSLPGLAGAILGKALYSGAISLPEALRAVGPGRWQDLPPETGSRWA.

Asp-15 (proton acceptor) is an active-site residue. The active-site Proton donor is Asp-136.

It belongs to the HisA/HisF family.

It is found in the cytoplasm. It catalyses the reaction 1-(5-phospho-beta-D-ribosyl)-5-[(5-phospho-beta-D-ribosylamino)methylideneamino]imidazole-4-carboxamide = 5-[(5-phospho-1-deoxy-D-ribulos-1-ylimino)methylamino]-1-(5-phospho-beta-D-ribosyl)imidazole-4-carboxamide. Its pathway is amino-acid biosynthesis; L-histidine biosynthesis; L-histidine from 5-phospho-alpha-D-ribose 1-diphosphate: step 4/9. This chain is 1-(5-phosphoribosyl)-5-[(5-phosphoribosylamino)methylideneamino] imidazole-4-carboxamide isomerase, found in Synechococcus sp. (strain JA-3-3Ab) (Cyanobacteria bacterium Yellowstone A-Prime).